The following is a 34-amino-acid chain: Photosystem II reaction center protein M (34 aa).

The helical transmembrane segment at 5 to 25 (ILAFIATALFILVPTAFLLII) threads the bilayer.

This sequence belongs to the PsbM family. In terms of assembly, PSII is composed of 1 copy each of membrane proteins PsbA, PsbB, PsbC, PsbD, PsbE, PsbF, PsbH, PsbI, PsbJ, PsbK, PsbL, PsbM, PsbT, PsbX, PsbY, PsbZ, Psb30/Ycf12, at least 3 peripheral proteins of the oxygen-evolving complex and a large number of cofactors. It forms dimeric complexes.

Its subcellular location is the plastid. It is found in the chloroplast thylakoid membrane. Functionally, one of the components of the core complex of photosystem II (PSII). PSII is a light-driven water:plastoquinone oxidoreductase that uses light energy to abstract electrons from H(2)O, generating O(2) and a proton gradient subsequently used for ATP formation. It consists of a core antenna complex that captures photons, and an electron transfer chain that converts photonic excitation into a charge separation. This subunit is found at the monomer-monomer interface. In Phaseolus vulgaris (Kidney bean), this protein is Photosystem II reaction center protein M.